A 623-amino-acid chain; its full sequence is Glutathione import ATP-binding protein GsiA (623 aa).

2 consecutive ABC transporter domains span residues 15-269 and 325-564; these read VSGL…QTLL and LRSG…RKLM. Residues 49–56 and 357–364 contribute to the ATP site; these read GESGSGKS.

This sequence belongs to the ABC transporter superfamily. Glutathione importer (TC 3.A.1.5.11) family. In terms of assembly, the complex is composed of two ATP-binding proteins (GsiA), two transmembrane proteins (GsiC and GsiD) and a solute-binding protein (GsiB).

It localises to the cell inner membrane. The enzyme catalyses glutathione(out) + ATP + H2O = glutathione(in) + ADP + phosphate + H(+). In terms of biological role, part of the ABC transporter complex GsiABCD involved in glutathione import. Responsible for energy coupling to the transport system. This chain is Glutathione import ATP-binding protein GsiA, found in Salmonella typhi.